Consider the following 475-residue polypeptide: Ribulose bisphosphate carboxylase large chain (475 aa).

Residues 1–2 constitute a propeptide that is removed on maturation; the sequence is MS. An N-acetylproline modification is found at P3. Residue K14 is modified to N6,N6,N6-trimethyllysine. Positions 123 and 173 each coordinate substrate. K175 functions as the Proton acceptor in the catalytic mechanism. K177 is a substrate binding site. Residues K201, D203, and E204 each contribute to the Mg(2+) site. N6-carboxylysine is present on K201. Residue H294 is the Proton acceptor of the active site. Positions 295, 327, and 379 each coordinate substrate.

Belongs to the RuBisCO large chain family. Type I subfamily. Heterohexadecamer of 8 large chains and 8 small chains; disulfide-linked. The disulfide link is formed within the large subunit homodimers. Mg(2+) serves as cofactor. In terms of processing, the disulfide bond which can form in the large chain dimeric partners within the hexadecamer appears to be associated with oxidative stress and protein turnover.

Its subcellular location is the plastid. The protein resides in the chloroplast. The enzyme catalyses 2 (2R)-3-phosphoglycerate + 2 H(+) = D-ribulose 1,5-bisphosphate + CO2 + H2O. The catalysed reaction is D-ribulose 1,5-bisphosphate + O2 = 2-phosphoglycolate + (2R)-3-phosphoglycerate + 2 H(+). RuBisCO catalyzes two reactions: the carboxylation of D-ribulose 1,5-bisphosphate, the primary event in carbon dioxide fixation, as well as the oxidative fragmentation of the pentose substrate in the photorespiration process. Both reactions occur simultaneously and in competition at the same active site. The protein is Ribulose bisphosphate carboxylase large chain of Pinus koraiensis (Korean pine).